Consider the following 393-residue polypeptide: Metal tolerance protein C2 (393 aa).

The tract at residues Met1 to Val23 is disordered. Residues Met1 to Arg113 are Cytoplasmic-facing. Residues Gly11–Ser21 show a composition bias toward basic and acidic residues. Residues Leu114–Phe134 form a helical membrane-spanning segment. Residues Thr135 to Gly139 are Vacuolar-facing. Residues Leu140–Ala160 form a helical membrane-spanning segment. Over Met161–Thr186 the chain is Cytoplasmic. Residues Asn187 to Ile207 traverse the membrane as a helical segment. Residues Gln208 to Lys214 lie on the Vacuolar side of the membrane. The chain crosses the membrane as a helical span at residues His215–Phe235. Residues Arg236–His259 lie on the Cytoplasmic side of the membrane. A helical transmembrane segment spans residues Val260–Gly280. The Vacuolar portion of the chain corresponds to Val281–Asn283. Residues Ala284–Phe304 form a helical membrane-spanning segment. The Cytoplasmic portion of the chain corresponds to Lys305 to Thr393.

Belongs to the cation diffusion facilitator (CDF) transporter (TC 2.A.4) family.

The protein resides in the vacuole membrane. Functionally, involved in sequestration of excess metal in the cytoplasm into vacuoles to maintain metal homeostasis. This is Metal tolerance protein C2 (MTPC2) from Arabidopsis thaliana (Mouse-ear cress).